The primary structure comprises 78 residues: Acyl carrier protein (78 aa).

Residues 2-77 (STIEERVKKI…AAIDYVTSHQ (76 aa)) enclose the Carrier domain. Position 37 is an O-(pantetheine 4'-phosphoryl)serine (serine 37).

The protein belongs to the acyl carrier protein (ACP) family. 4'-phosphopantetheine is transferred from CoA to a specific serine of apo-ACP by AcpS. This modification is essential for activity because fatty acids are bound in thioester linkage to the sulfhydryl of the prosthetic group.

It is found in the cytoplasm. Its pathway is lipid metabolism; fatty acid biosynthesis. In terms of biological role, carrier of the growing fatty acid chain in fatty acid biosynthesis. This chain is Acyl carrier protein, found in Pseudomonas fluorescens (strain SBW25).